We begin with the raw amino-acid sequence, 184 residues long: Ribosome-recycling factor (184 aa).

This sequence belongs to the RRF family.

The protein resides in the cytoplasm. Responsible for the release of ribosomes from messenger RNA at the termination of protein biosynthesis. May increase the efficiency of translation by recycling ribosomes from one round of translation to another. In Borrelia garinii subsp. bavariensis (strain ATCC BAA-2496 / DSM 23469 / PBi) (Borreliella bavariensis), this protein is Ribosome-recycling factor.